Here is a 952-residue protein sequence, read N- to C-terminus: UvrABC system protein A (952 aa).

38-45 (GLSGSGKS) contacts ATP. A C4-type zinc finger spans residues 258 to 285 (CNECGFSIPELEPRFFSFNSPVGACKSC). 2 ABC transporter domains span residues 315–596 (FRSV…KKSI) and 616–945 (GNGK…LFLE). Position 648-655 (648-655 (GVSGSGKS)) interacts with ATP. The C4-type zinc finger occupies 747–773 (CENCSGDGLIKIEMHFLPDVFVKCESC).

Belongs to the ABC transporter superfamily. UvrA family. In terms of assembly, forms a heterotetramer with UvrB during the search for lesions.

It is found in the cytoplasm. Its function is as follows. The UvrABC repair system catalyzes the recognition and processing of DNA lesions. UvrA is an ATPase and a DNA-binding protein. A damage recognition complex composed of 2 UvrA and 2 UvrB subunits scans DNA for abnormalities. When the presence of a lesion has been verified by UvrB, the UvrA molecules dissociate. The polypeptide is UvrABC system protein A (Malacoplasma penetrans (strain HF-2) (Mycoplasma penetrans)).